The chain runs to 690 residues: Elongation factor G (690 aa).

The region spanning glutamate 8–leucine 282 is the tr-type G domain. GTP contacts are provided by residues alanine 17–threonine 24, aspartate 81–histidine 85, and asparagine 135–aspartate 138.

Belongs to the TRAFAC class translation factor GTPase superfamily. Classic translation factor GTPase family. EF-G/EF-2 subfamily.

Its subcellular location is the cytoplasm. In terms of biological role, catalyzes the GTP-dependent ribosomal translocation step during translation elongation. During this step, the ribosome changes from the pre-translocational (PRE) to the post-translocational (POST) state as the newly formed A-site-bound peptidyl-tRNA and P-site-bound deacylated tRNA move to the P and E sites, respectively. Catalyzes the coordinated movement of the two tRNA molecules, the mRNA and conformational changes in the ribosome. This chain is Elongation factor G, found in Alkaliphilus oremlandii (strain OhILAs) (Clostridium oremlandii (strain OhILAs)).